The primary structure comprises 274 residues: 4-deoxy-L-threo-5-hexosulose-uronate ketol-isomerase (274 aa).

Residues H192, H194, E199, and H241 each coordinate Zn(2+).

The protein belongs to the KduI family. Requires Zn(2+) as cofactor.

The catalysed reaction is 5-dehydro-4-deoxy-D-glucuronate = 3-deoxy-D-glycero-2,5-hexodiulosonate. Its pathway is glycan metabolism; pectin degradation; 2-dehydro-3-deoxy-D-gluconate from pectin: step 4/5. Functionally, catalyzes the isomerization of 5-dehydro-4-deoxy-D-glucuronate to 3-deoxy-D-glycero-2,5-hexodiulosonate. The chain is 4-deoxy-L-threo-5-hexosulose-uronate ketol-isomerase from Cereibacter sphaeroides (strain ATCC 17029 / ATH 2.4.9) (Rhodobacter sphaeroides).